Here is a 99-residue protein sequence, read N- to C-terminus: ATP-dependent Clp protease adapter protein ClpS (99 aa).

Belongs to the ClpS family. Binds to the N-terminal domain of the chaperone ClpA.

In terms of biological role, involved in the modulation of the specificity of the ClpAP-mediated ATP-dependent protein degradation. This Acetivibrio thermocellus (strain ATCC 27405 / DSM 1237 / JCM 9322 / NBRC 103400 / NCIMB 10682 / NRRL B-4536 / VPI 7372) (Clostridium thermocellum) protein is ATP-dependent Clp protease adapter protein ClpS.